A 257-amino-acid polypeptide reads, in one-letter code: BTB/POZ domain-containing protein KCTD1 (257 aa).

The disordered stretch occupies residues 1–25 (MSRPLITRSPASPLNNQGIPTPAQL). Phosphoserine is present on residues S9 and S12. Positions 9-25 (SPASPLNNQGIPTPAQL) are enriched in polar residues. A BTB domain is found at 30–100 (APVHIDVGGH…LRTSKLLIPD (71 aa)).

As to quaternary structure, forms homopentamers. Interacts with KCTD15, probably forming heteropentamers depending on its abundance in a cell-type dependent manner. Interacts with TFAP2A, TFAP2B and TFAP2C via the BTB domain. In terms of processing, sumoylated. Expressed in mammary gland, kidney, brain and ovary.

The protein resides in the nucleus. In terms of biological role, may repress the transcriptional activity of AP-2 family members, including TFAP2A, TFAP2B and TFAP2C to various extent. The sequence is that of BTB/POZ domain-containing protein KCTD1 (KCTD1) from Homo sapiens (Human).